The following is a 265-amino-acid chain: Energy-coupling factor transporter transmembrane protein EcfT (265 aa).

6 helical membrane-spanning segments follow: residues 26-46 (MVFVFIMMILIFLMNNWQTYA), 47-67 (VGIILIFIILKASNLSFMFLF), 72-92 (PILFLLIFTLLMHIFLTKGGA), 107-127 (VIMGIMISLRFILIIFLTTIM), 152-172 (LPVHELALMMSIALRFIPTLM), and 243-263 (HTYDTLSLLTLIPITLLILYL).

The protein belongs to the energy-coupling factor EcfT family. As to quaternary structure, forms a stable energy-coupling factor (ECF) transporter complex composed of 2 membrane-embedded substrate-binding proteins (S component), 2 ATP-binding proteins (A component) and 2 transmembrane proteins (T component). May be able to interact with more than 1 S component at a time.

It localises to the cell membrane. Its function is as follows. Transmembrane (T) component of an energy-coupling factor (ECF) ABC-transporter complex. Unlike classic ABC transporters this ECF transporter provides the energy necessary to transport a number of different substrates. The chain is Energy-coupling factor transporter transmembrane protein EcfT from Macrococcus caseolyticus (strain JCSC5402) (Macrococcoides caseolyticum).